The chain runs to 211 residues: Protein-L-isoaspartate O-methyltransferase (211 aa).

Residue Ser-60 is part of the active site.

Belongs to the methyltransferase superfamily. L-isoaspartyl/D-aspartyl protein methyltransferase family.

The protein localises to the cytoplasm. It carries out the reaction [protein]-L-isoaspartate + S-adenosyl-L-methionine = [protein]-L-isoaspartate alpha-methyl ester + S-adenosyl-L-homocysteine. Functionally, catalyzes the methyl esterification of L-isoaspartyl residues in peptides and proteins that result from spontaneous decomposition of normal L-aspartyl and L-asparaginyl residues. It plays a role in the repair and/or degradation of damaged proteins. The sequence is that of Protein-L-isoaspartate O-methyltransferase from Hahella chejuensis (strain KCTC 2396).